The sequence spans 136 residues: ATP synthase epsilon chain, chloroplastic (136 aa).

This sequence belongs to the ATPase epsilon chain family. As to quaternary structure, F-type ATPases have 2 components, CF(1) - the catalytic core - and CF(0) - the membrane proton channel. CF(1) has five subunits: alpha(3), beta(3), gamma(1), delta(1), epsilon(1). CF(0) has three main subunits: a, b and c.

It localises to the plastid. It is found in the chloroplast thylakoid membrane. Produces ATP from ADP in the presence of a proton gradient across the membrane. The sequence is that of ATP synthase epsilon chain, chloroplastic from Tetradesmus obliquus (Green alga).